The chain runs to 349 residues: Very-long-chain 3-oxoacyl-CoA reductase (349 aa).

A helical transmembrane segment spans residues 19 to 39 (AIIFALLLGVFKLTVFSLKFA). The NADP(+) site is built by Val-65, Asp-119, Asn-146, Tyr-221, Lys-225, Val-254, and Ser-256. Tyr-221 serves as the catalytic Proton donor. Lys-225 (lowers pKa of active site Tyr) is an active-site residue.

Belongs to the short-chain dehydrogenases/reductases (SDR) family.

The protein resides in the endoplasmic reticulum membrane. The enzyme catalyses a very-long-chain (3R)-3-hydroxyacyl-CoA + NADP(+) = a very-long-chain 3-oxoacyl-CoA + NADPH + H(+). It functions in the pathway lipid metabolism; fatty acid biosynthesis. Component of the microsomal membrane bound fatty acid elongation system, which produces the 26-carbon very long-chain fatty acids (VLCFA) from palmitate. Catalyzes the reduction of the 3-ketoacyl-CoA intermediate that is formed in each cycle of fatty acid elongation. VLCFAs serve as precursors for ceramide and sphingolipids. This is Very-long-chain 3-oxoacyl-CoA reductase from Candida albicans (strain SC5314 / ATCC MYA-2876) (Yeast).